The primary structure comprises 456 residues: UPF0210 protein Dde_3704 (456 aa).

Belongs to the UPF0210 family. In terms of assembly, homodimer.

This is UPF0210 protein Dde_3704 from Oleidesulfovibrio alaskensis (strain ATCC BAA-1058 / DSM 17464 / G20) (Desulfovibrio alaskensis).